The sequence spans 114 residues: Iron-sulfur cluster insertion protein ErpA (114 aa).

Iron-sulfur cluster-binding residues include C42, C106, and C108.

It belongs to the HesB/IscA family. As to quaternary structure, homodimer. Iron-sulfur cluster serves as cofactor.

Required for insertion of 4Fe-4S clusters for at least IspG. The polypeptide is Iron-sulfur cluster insertion protein ErpA (Edwardsiella ictaluri (strain 93-146)).